Here is a 192-residue protein sequence, read N- to C-terminus: Superoxide dismutase [Fe] (192 aa).

Fe cation contacts are provided by His27, His74, Asp157, and His161.

The protein belongs to the iron/manganese superoxide dismutase family. As to quaternary structure, homodimer. Fe cation serves as cofactor.

The catalysed reaction is 2 superoxide + 2 H(+) = H2O2 + O2. In terms of biological role, destroys superoxide anion radicals which are normally produced within the cells and which are toxic to biological systems. This Bordetella pertussis (strain Tohama I / ATCC BAA-589 / NCTC 13251) protein is Superoxide dismutase [Fe] (sodB).